The chain runs to 106 residues: uncharacterized protein (106 aa).

The segment at 1 to 46 is disordered; the sequence is MPQGGTPCRRARRAVRPERPTSPEGVFCVGGGAPGGPPDTTNTVSA.

This is an uncharacterized protein from Gracula (BFDV).